A 71-amino-acid polypeptide reads, in one-letter code: Small ribosomal subunit protein bS21 (71 aa).

It belongs to the bacterial ribosomal protein bS21 family.

The protein is Small ribosomal subunit protein bS21 of Buchnera aphidicola subsp. Schizaphis graminum (strain Sg).